Here is a 125-residue protein sequence, read N- to C-terminus: NADH dehydrogenase [ubiquinone] 1 beta subcomplex subunit 8, mitochondrial (125 aa).

Residues 1 to 29 constitute a mitochondrion transit peptide; it reads MAGRLSGVASRIMGGNGVVARSVGSSLRQ. A helical membrane pass occupies residues 78–98; that stretch reads ALAWLSGGLGFFVGLGLLAVL.

Belongs to the complex I NDUFB8 subunit family. As to quaternary structure, complex I is composed of at least 49 different subunits.

The protein localises to the mitochondrion inner membrane. Its function is as follows. Accessory subunit of the mitochondrial membrane respiratory chain NADH dehydrogenase (Complex I), that is believed not to be involved in catalysis. Complex I functions in the transfer of electrons from NADH to the respiratory chain. The immediate electron acceptor for the enzyme is believed to be ubiquinone. The protein is NADH dehydrogenase [ubiquinone] 1 beta subcomplex subunit 8, mitochondrial of Arabidopsis thaliana (Mouse-ear cress).